Consider the following 512-residue polypeptide: Dihydroniloticin synthase CYP71CD2 (512 aa).

Residues 1–21 (MNLQLDYFSITSFLVFLVVLF) traverse the membrane as a helical segment. Asn436 lines the heme pocket.

This sequence belongs to the cytochrome P450 family. The cofactor is heme. Mainly expressed in petioles and roots, and, to a lower extent, in leaves.

It localises to the membrane. The catalysed reaction is tirucalla-7,24-dien-3beta-ol + 2 reduced [NADPH--hemoprotein reductase] + 2 O2 = dihydroniloticin + 2 oxidized [NADPH--hemoprotein reductase] + 2 H2O + 2 H(+). The protein operates within secondary metabolite biosynthesis; terpenoid biosynthesis. Its function is as follows. Monooxygenase involved in the biosynthesis of limonoids triterpene natural products such as azadirachtin, an antifeedant widely used as bioinsecticide, and possessing many medicinal applications including anti-tumoral, anti-malarial, anti-rheumatic, antibacterial, anti-inflammatory, anti-pyretic and diuretic effects. Catalyzes the conversion of tirucalladienol to dihydroniloticin. This chain is Dihydroniloticin synthase CYP71CD2, found in Melia azedarach (Chinaberry tree).